A 208-amino-acid chain; its full sequence is UPF0637 protein BcerKBAB4_3786 (208 aa).

The protein belongs to the UPF0637 family.

The polypeptide is UPF0637 protein BcerKBAB4_3786 (Bacillus mycoides (strain KBAB4) (Bacillus weihenstephanensis)).